A 232-amino-acid chain; its full sequence is Octanoyltransferase (232 aa).

In terms of domain architecture, BPL/LPL catalytic spans 44 to 219 (EHTADEVWVV…QLARQFGLVL (176 aa)). Substrate-binding positions include 83–90 (RGGQVTYH), 150–152 (ALG), and 163–165 (GLS). Cys-181 functions as the Acyl-thioester intermediate in the catalytic mechanism.

The protein belongs to the LipB family.

It localises to the cytoplasm. The catalysed reaction is octanoyl-[ACP] + L-lysyl-[protein] = N(6)-octanoyl-L-lysyl-[protein] + holo-[ACP] + H(+). It participates in protein modification; protein lipoylation via endogenous pathway; protein N(6)-(lipoyl)lysine from octanoyl-[acyl-carrier-protein]: step 1/2. In terms of biological role, catalyzes the transfer of endogenously produced octanoic acid from octanoyl-acyl-carrier-protein onto the lipoyl domains of lipoate-dependent enzymes. Lipoyl-ACP can also act as a substrate although octanoyl-ACP is likely to be the physiological substrate. In Xanthomonas euvesicatoria pv. vesicatoria (strain 85-10) (Xanthomonas campestris pv. vesicatoria), this protein is Octanoyltransferase.